Reading from the N-terminus, the 210-residue chain is MKNKLDLSLYLVATKGNKSEECFLNTLENAIKGGVSIIQLREKELNAREFYKLGLKVQKLCKSYKIPFLINDRVDIALALDADGVHLGQEDLEAKLARKLLGDEKIIGLSLKKLEQLEFIQGVNYLGCGAIKATPTKESSLLSLELLSQICDKSPIGVVAIGGIDKEALVELKGINLSGVAVVRAIMDAKDAFLAAKELKRKIYENLSLK.

4-amino-2-methyl-5-(diphosphooxymethyl)pyrimidine-binding positions include 39–43 and N71; that span reads QLREK. D72 and D91 together coordinate Mg(2+). S110 serves as a coordination point for 4-amino-2-methyl-5-(diphosphooxymethyl)pyrimidine. 134-136 is a binding site for 2-[(2R,5Z)-2-carboxy-4-methylthiazol-5(2H)-ylidene]ethyl phosphate; it reads TPT. A 4-amino-2-methyl-5-(diphosphooxymethyl)pyrimidine-binding site is contributed by K137. G163 is a binding site for 2-[(2R,5Z)-2-carboxy-4-methylthiazol-5(2H)-ylidene]ethyl phosphate.

This sequence belongs to the thiamine-phosphate synthase family. Mg(2+) serves as cofactor.

The catalysed reaction is 2-[(2R,5Z)-2-carboxy-4-methylthiazol-5(2H)-ylidene]ethyl phosphate + 4-amino-2-methyl-5-(diphosphooxymethyl)pyrimidine + 2 H(+) = thiamine phosphate + CO2 + diphosphate. The enzyme catalyses 2-(2-carboxy-4-methylthiazol-5-yl)ethyl phosphate + 4-amino-2-methyl-5-(diphosphooxymethyl)pyrimidine + 2 H(+) = thiamine phosphate + CO2 + diphosphate. It catalyses the reaction 4-methyl-5-(2-phosphooxyethyl)-thiazole + 4-amino-2-methyl-5-(diphosphooxymethyl)pyrimidine + H(+) = thiamine phosphate + diphosphate. It functions in the pathway cofactor biosynthesis; thiamine diphosphate biosynthesis; thiamine phosphate from 4-amino-2-methyl-5-diphosphomethylpyrimidine and 4-methyl-5-(2-phosphoethyl)-thiazole: step 1/1. Functionally, condenses 4-methyl-5-(beta-hydroxyethyl)thiazole monophosphate (THZ-P) and 2-methyl-4-amino-5-hydroxymethyl pyrimidine pyrophosphate (HMP-PP) to form thiamine monophosphate (TMP). In Campylobacter jejuni (strain RM1221), this protein is Thiamine-phosphate synthase.